The chain runs to 468 residues: Glutamate--tRNA ligase (468 aa).

The short motif at 8-18 is the 'HIGH' region element; it reads PSPTGFLHVGG. Zn(2+)-binding residues include Cys-97, Cys-99, Cys-124, and Asp-126. The short motif at 236-240 is the 'KMSKS' region element; that stretch reads KLSKR. Lys-239 lines the ATP pocket.

The protein belongs to the class-I aminoacyl-tRNA synthetase family. Glutamate--tRNA ligase type 1 subfamily. As to quaternary structure, monomer. Zn(2+) is required as a cofactor.

It is found in the cytoplasm. It catalyses the reaction tRNA(Glu) + L-glutamate + ATP = L-glutamyl-tRNA(Glu) + AMP + diphosphate. Functionally, catalyzes the attachment of glutamate to tRNA(Glu) in a two-step reaction: glutamate is first activated by ATP to form Glu-AMP and then transferred to the acceptor end of tRNA(Glu). This Francisella tularensis subsp. tularensis (strain SCHU S4 / Schu 4) protein is Glutamate--tRNA ligase.